A 151-amino-acid chain; its full sequence is Small ribosomal subunit protein uS9 (151 aa).

This sequence belongs to the universal ribosomal protein uS9 family.

The chain is Small ribosomal subunit protein uS9 (RpS16) from Spodoptera frugiperda (Fall armyworm).